Reading from the N-terminus, the 202-residue chain is Ribosome maturation factor RimM (202 aa).

The 96-residue stretch at alanine 100–leucine 195 folds into the PRC barrel domain.

Belongs to the RimM family. As to quaternary structure, binds ribosomal protein uS19.

Its subcellular location is the cytoplasm. In terms of biological role, an accessory protein needed during the final step in the assembly of 30S ribosomal subunit, possibly for assembly of the head region. Essential for efficient processing of 16S rRNA. May be needed both before and after RbfA during the maturation of 16S rRNA. It has affinity for free ribosomal 30S subunits but not for 70S ribosomes. This Bifidobacterium longum (strain NCC 2705) protein is Ribosome maturation factor RimM.